The chain runs to 135 residues: uncharacterized protein (135 aa).

This is an uncharacterized protein from Saccharomyces cerevisiae (strain ATCC 204508 / S288c) (Baker's yeast).